The primary structure comprises 131 residues: Profilin-6 (131 aa).

Cys-13 and Cys-115 are oxidised to a cystine. Positions 81–97 (AVIRGKKGSGGITVKKT) match the Involved in PIP2 interaction motif. Thr-111 carries the phosphothreonine modification.

It belongs to the profilin family. As to quaternary structure, occurs in many kinds of cells as a complex with monomeric actin in a 1:1 ratio. Phosphorylated by MAP kinases.

Its subcellular location is the cytoplasm. It localises to the cytoskeleton. In terms of biological role, binds to actin and affects the structure of the cytoskeleton. At high concentrations, profilin prevents the polymerization of actin, whereas it enhances it at low concentrations. The protein is Profilin-6 of Zea mays (Maize).